We begin with the raw amino-acid sequence, 484 residues long: Glutamate--tRNA ligase (484 aa).

The 'HIGH' region motif lies at 11 to 21 (PSPTGYLHIGN). The 'KMSKS' region signature appears at 252 to 256 (KLSKR). Lys255 is an ATP binding site.

This sequence belongs to the class-I aminoacyl-tRNA synthetase family. Glutamate--tRNA ligase type 1 subfamily. As to quaternary structure, monomer.

Its subcellular location is the cytoplasm. It catalyses the reaction tRNA(Glu) + L-glutamate + ATP = L-glutamyl-tRNA(Glu) + AMP + diphosphate. Functionally, catalyzes the attachment of glutamate to tRNA(Glu) in a two-step reaction: glutamate is first activated by ATP to form Glu-AMP and then transferred to the acceptor end of tRNA(Glu). In Staphylococcus epidermidis (strain ATCC 35984 / DSM 28319 / BCRC 17069 / CCUG 31568 / BM 3577 / RP62A), this protein is Glutamate--tRNA ligase.